Consider the following 498-residue polypeptide: Thiamine transporter 1 (498 aa).

At methionine 1 the chain carries N-acetylmethionine. Residues methionine 1 to glutamate 28 are Cytoplasmic-facing. The helical transmembrane segment at cysteine 29–leucine 46 threads the bilayer. Topologically, residues arginine 47–asparagine 71 are extracellular. Residue asparagine 63 is glycosylated (N-linked (GlcNAc...) asparagine). The chain crosses the membrane as a helical span at residues glutamate 72–threonine 92. The Cytoplasmic segment spans residues aspartate 93–glycine 105. Residues leucine 106–phenylalanine 126 form a helical membrane-spanning segment. Over leucine 127 to glutamate 128 the chain is Extracellular. A helical transmembrane segment spans residues phenylalanine 129–valine 149. Residues aspartate 150–alanine 164 lie on the Cytoplasmic side of the membrane. Residues threonine 165–tryptophan 185 form a helical membrane-spanning segment. Serine 186 is a topological domain (extracellular). Residues leucine 187 to phenylalanine 207 form a helical membrane-spanning segment. At leucine 208–proline 295 the chain is on the cytoplasmic side. Serine 222 carries the phosphoserine modification. The chain crosses the membrane as a helical span at residues leucine 296 to tyrosine 316. At alanine 317–asparagine 334 the chain is on the extracellular side. The helical transmembrane segment at glycine 335 to isoleucine 355 threads the bilayer. Residues lysine 356–serine 360 are Cytoplasmic-facing. The chain crosses the membrane as a helical span at residues threonine 361–methionine 381. Over aspartate 382–serine 386 the chain is Extracellular. The chain crosses the membrane as a helical span at residues isoleucine 387–isoleucine 407. The Cytoplasmic segment spans residues alanine 408–leucine 423. Residues valine 424 to valine 444 form a helical membrane-spanning segment. The Extracellular portion of the chain corresponds to aspartate 445–glutamine 456. Residues phenylalanine 457–valine 477 traverse the membrane as a helical segment. The Cytoplasmic segment spans residues serine 478–serine 498.

It belongs to the reduced folate carrier (RFC) transporter (TC 2.A.48) family. Interacts with TSPAN1; this interaction increases the stability of SLC19A2. Interacts with TMEM63B. In terms of tissue distribution, expressed in liver. Expressed in cochlear hair cells and duodenum (at protein level). Detected in pancreatic acinar cells (at protein level). Also expressed strongly in pancreatic islet cells. Expressed in the testis. As to expression, very highly expressed in liver, and also detected at lower levels in heart, testis, kidney, brain and spleen. Expressed at low levels in liver and spleen.

Its subcellular location is the cell membrane. The catalysed reaction is thiamine(out) + H(+)(in) = thiamine(in) + H(+)(out). It carries out the reaction pyridoxine(out) + n H(+)(out) = pyridoxine(in) + n H(+)(in). High-affinity transporter for the intake of thiamine. Essential for spermatogenesis. Mediates H(+)-dependent pyridoxine transport. The chain is Thiamine transporter 1 from Mus musculus (Mouse).